The following is a 430-amino-acid chain: Adenylosuccinate synthetase (430 aa).

GTP-binding positions include 12-18 and 40-42; these read GDEGKGK and GHT. D13 serves as the catalytic Proton acceptor. Mg(2+)-binding residues include D13 and G40. Residues 13–16, 38–41, T130, R144, Q224, and T239 each bind IMP; these read DEGK and NAGH. The Proton donor role is filled by H41. Residues 277–298 are disordered; it reads PFPTEQDNETGRKIGERGREFG. The span at 285–296 shows a compositional bias: basic and acidic residues; it reads ETGRKIGERGRE. Position 299–305 (299–305) interacts with substrate; sequence TNTGRPR. R303 is an IMP binding site. GTP is bound by residues R305, 331–333, and 413–415; these read KLD and STS.

This sequence belongs to the adenylosuccinate synthetase family. Homodimer. Mg(2+) is required as a cofactor.

It localises to the cytoplasm. It carries out the reaction IMP + L-aspartate + GTP = N(6)-(1,2-dicarboxyethyl)-AMP + GDP + phosphate + 2 H(+). Its pathway is purine metabolism; AMP biosynthesis via de novo pathway; AMP from IMP: step 1/2. Functionally, plays an important role in the de novo pathway of purine nucleotide biosynthesis. Catalyzes the first committed step in the biosynthesis of AMP from IMP. The sequence is that of Adenylosuccinate synthetase from Bradyrhizobium sp. (strain BTAi1 / ATCC BAA-1182).